A 543-amino-acid chain; its full sequence is UBP9-binding protein bun62 (543 aa).

S43 bears the Phosphoserine mark. WD repeat units lie at residues 239 to 279 (LNSS…QPLH), 320 to 361 (FSKS…DVFH), 362 to 401 (SYFA…LVAR), 404 to 448 (GHKS…IHRP), and 513 to 542 (VDDS…TWQR).

Interacts with ubp9 and bun107.

It localises to the nucleus. The protein localises to the cytoplasm. It is found in the cell tip. Its function is as follows. Required for the ubp9 recruitment to septa and cell tips but also for its enzymatic activity at these specific locations. The sequence is that of UBP9-binding protein bun62 (bun62) from Schizosaccharomyces pombe (strain 972 / ATCC 24843) (Fission yeast).